The chain runs to 312 residues: Malate dehydrogenase (312 aa).

Residues 12–17 (GAGFTG) and Asp36 contribute to the NAD(+) site. Substrate-binding residues include Arg87 and Arg93. NAD(+) contacts are provided by residues Asn100 and 123–125 (LTN). Asn125 contributes to the substrate binding site. Ser149 bears the Phosphoserine mark. Position 156 (Arg156) interacts with substrate. The active-site Proton acceptor is the His180.

Belongs to the LDH/MDH superfamily. MDH type 3 family.

It catalyses the reaction (S)-malate + NAD(+) = oxaloacetate + NADH + H(+). Its function is as follows. Catalyzes the reversible oxidation of malate to oxaloacetate. The chain is Malate dehydrogenase from Bacillus anthracis (strain A0248).